Here is a 348-residue protein sequence, read N- to C-terminus: Phosphate acyltransferase (348 aa).

It belongs to the PlsX family. In terms of assembly, homodimer. Probably interacts with PlsY.

The protein resides in the cytoplasm. The catalysed reaction is a fatty acyl-[ACP] + phosphate = an acyl phosphate + holo-[ACP]. The protein operates within lipid metabolism; phospholipid metabolism. Functionally, catalyzes the reversible formation of acyl-phosphate (acyl-PO(4)) from acyl-[acyl-carrier-protein] (acyl-ACP). This enzyme utilizes acyl-ACP as fatty acyl donor, but not acyl-CoA. The sequence is that of Phosphate acyltransferase from Rhizobium rhizogenes (strain K84 / ATCC BAA-868) (Agrobacterium radiobacter).